Here is a 99-residue protein sequence, read N- to C-terminus: Beta-2-microglobulin (99 aa).

The Ig-like C1-type domain occupies 5–93; that stretch reads PRVQVYSRHP…HITLSEPKIV (89 aa). The cysteines at positions 25 and 80 are disulfide-linked.

Belongs to the beta-2-microglobulin family. In terms of assembly, heterodimer of an alpha chain and a beta chain. Beta-2-microglobulin is the beta-chain of major histocompatibility complex class I molecules.

It localises to the secreted. Its function is as follows. Component of the class I major histocompatibility complex (MHC). Involved in the presentation of peptide antigens to the immune system. The polypeptide is Beta-2-microglobulin (B2M) (Cavia porcellus (Guinea pig)).